The following is an 86-amino-acid chain: Large ribosomal subunit protein bL31 (86 aa).

The interval 65–86 (YGMGSANSATSKEQKEEKDSKK) is disordered. Residues 76–86 (KEQKEEKDSKK) show a composition bias toward basic and acidic residues.

Belongs to the bacterial ribosomal protein bL31 family. Type A subfamily. Part of the 50S ribosomal subunit.

Functionally, binds the 23S rRNA. This chain is Large ribosomal subunit protein bL31, found in Prochlorococcus marinus (strain AS9601).